The primary structure comprises 406 residues: Aminomethyltransferase, mitochondrial (406 aa).

The transit peptide at 1 to 29 (MRGGLWQLGQSITRRLAQADKKTIGRRCF) directs the protein to the mitochondrion. The substrate site is built by Glu234, Arg265, and Tyr403.

Belongs to the GcvT family. In terms of assembly, the glycine cleavage system is composed of four proteins: P, T, L and H.

The protein localises to the mitochondrion. It carries out the reaction N(6)-[(R)-S(8)-aminomethyldihydrolipoyl]-L-lysyl-[protein] + (6S)-5,6,7,8-tetrahydrofolate = N(6)-[(R)-dihydrolipoyl]-L-lysyl-[protein] + (6R)-5,10-methylene-5,6,7,8-tetrahydrofolate + NH4(+). Functionally, the glycine cleavage system catalyzes the degradation of glycine. In Solanum tuberosum (Potato), this protein is Aminomethyltransferase, mitochondrial (GDCST).